The following is a 420-amino-acid chain: Serine hydroxymethyltransferase (420 aa).

(6S)-5,6,7,8-tetrahydrofolate-binding positions include Leu-121 and 125–127 (GHL). Lys-230 is modified (N6-(pyridoxal phosphate)lysine). 355 to 357 (SPF) serves as a coordination point for (6S)-5,6,7,8-tetrahydrofolate.

The protein belongs to the SHMT family. Homodimer. Pyridoxal 5'-phosphate serves as cofactor.

The protein localises to the cytoplasm. It carries out the reaction (6R)-5,10-methylene-5,6,7,8-tetrahydrofolate + glycine + H2O = (6S)-5,6,7,8-tetrahydrofolate + L-serine. The protein operates within one-carbon metabolism; tetrahydrofolate interconversion. Its pathway is amino-acid biosynthesis; glycine biosynthesis; glycine from L-serine: step 1/1. Functionally, catalyzes the reversible interconversion of serine and glycine with tetrahydrofolate (THF) serving as the one-carbon carrier. This reaction serves as the major source of one-carbon groups required for the biosynthesis of purines, thymidylate, methionine, and other important biomolecules. Also exhibits THF-independent aldolase activity toward beta-hydroxyamino acids, producing glycine and aldehydes, via a retro-aldol mechanism. This is Serine hydroxymethyltransferase from Streptococcus gordonii (strain Challis / ATCC 35105 / BCRC 15272 / CH1 / DL1 / V288).